A 318-amino-acid chain; its full sequence is tRNA dimethylallyltransferase (318 aa).

9 to 16 (GATASGKT) lines the ATP pocket. Residue 11-16 (TASGKT) participates in substrate binding. Interaction with substrate tRNA stretches follow at residues 34 to 37 (DSAQ) and 158 to 162 (QRIIR).

The protein belongs to the IPP transferase family. Monomer. Mg(2+) serves as cofactor.

The enzyme catalyses adenosine(37) in tRNA + dimethylallyl diphosphate = N(6)-dimethylallyladenosine(37) in tRNA + diphosphate. Catalyzes the transfer of a dimethylallyl group onto the adenine at position 37 in tRNAs that read codons beginning with uridine, leading to the formation of N6-(dimethylallyl)adenosine (i(6)A). The protein is tRNA dimethylallyltransferase of Dichelobacter nodosus (strain VCS1703A).